A 103-amino-acid chain; its full sequence is Truncated secreted TNF-receptor-like protein A53R (103 aa).

The TNFR-Cys 1 repeat unit spans residues 36–73 (SCDKGEYLDKRHNQCCNRCPPGEFAKVRCNGNDNTKCE). 3 cysteine pairs are disulfide-bonded: cysteine 37–cysteine 50, cysteine 51–cysteine 64, and cysteine 54–cysteine 72. The TNFR-Cys 2; truncated repeat unit spans residues 74–103 (RCPPHTYTTIPIILMDVINVENAQPDHLIR).

It belongs to the poxviridae A53R protein family.

The sequence is that of Truncated secreted TNF-receptor-like protein A53R from Vaccinia virus (strain Western Reserve) (VACV).